A 416-amino-acid polypeptide reads, in one-letter code: Serine hydroxymethyltransferase (416 aa).

Residues Leu-121 and 125–127 (GHL) each bind (6S)-5,6,7,8-tetrahydrofolate. N6-(pyridoxal phosphate)lysine is present on Lys-229.

Belongs to the SHMT family. Homodimer. Requires pyridoxal 5'-phosphate as cofactor.

It localises to the cytoplasm. It catalyses the reaction (6R)-5,10-methylene-5,6,7,8-tetrahydrofolate + glycine + H2O = (6S)-5,6,7,8-tetrahydrofolate + L-serine. It participates in one-carbon metabolism; tetrahydrofolate interconversion. The protein operates within amino-acid biosynthesis; glycine biosynthesis; glycine from L-serine: step 1/1. Its function is as follows. Catalyzes the reversible interconversion of serine and glycine with tetrahydrofolate (THF) serving as the one-carbon carrier. This reaction serves as the major source of one-carbon groups required for the biosynthesis of purines, thymidylate, methionine, and other important biomolecules. Also exhibits THF-independent aldolase activity toward beta-hydroxyamino acids, producing glycine and aldehydes, via a retro-aldol mechanism. In Neisseria meningitidis serogroup C (strain 053442), this protein is Serine hydroxymethyltransferase.